The chain runs to 83 residues: U5-theraphotoxin-Hs1a 1 (83 aa).

Positions 1–21 (MKTSMFLTLTGLGLLFVVCYA) are cleaved as a signal peptide. Positions 22–49 (SESEEKEFPKELLSSIFAADSDFKVEER) are excised as a propeptide. Cystine bridges form between cysteine 51-cysteine 63, cysteine 56-cysteine 68, and cysteine 62-cysteine 75.

The protein belongs to the neurotoxin 10 (Hwtx-1) family. 51 (Hntx-8) subfamily. Hntx-8 sub-subfamily. In terms of tissue distribution, expressed by the venom gland.

The protein localises to the secreted. In terms of biological role, agglutinates human and mice erythrocytes. This activity can be specifically inhibited by mannosamine. This lectin shows very low toxicity in both mammals and insects. The sequence is that of U5-theraphotoxin-Hs1a 1 from Cyriopagopus schmidti (Chinese bird spider).